The sequence spans 518 residues: uncharacterized protein (518 aa).

The protein belongs to the MG032/MG096/MG288 family.

This is an uncharacterized protein from Mycoplasma pneumoniae (strain ATCC 29342 / M129 / Subtype 1) (Mycoplasmoides pneumoniae).